We begin with the raw amino-acid sequence, 306 residues long: Replication termination factor 2 (306 aa).

The interval 193–276 is disordered; it reads AKLEKKTKKP…RSIADSEESE (84 aa). Over residues 226–240 the composition is skewed to basic and acidic residues; it reads GKPEEASLDSREKKT. Residues 243–255 are compositionally biased toward polar residues; that stretch reads APKSTAMNESSSG. Residue Ser287 is modified to Phosphoserine.

This sequence belongs to the rtf2 family. As to quaternary structure, interacts with DDI2; probably also interacts with DDI1. Undergoes proteasomal degradation, via DDI1 and DDI2. Removal from stalled replisomes and degradation are required for genome stability.

The protein resides in the chromosome. Replication termination factor which is a component of the elongating replisome. Required for ATR pathway signaling upon DNA damage and has a positive activity during DNA replication. Might function to facilitate fork pausing at replication fork barriers like the rDNA. May be globally required to stimulate ATR signaling after the fork stalls or encounters a lesion. Interacts with nascent DNA. The polypeptide is Replication termination factor 2 (Homo sapiens (Human)).